We begin with the raw amino-acid sequence, 277 residues long: uncharacterized protein (277 aa).

Disordered stretches follow at residues Lys33–Arg168 and Asn210–Phe277. The span at Asn34–Ser45 shows a compositional bias: basic and acidic residues. Positions Leu86–Ser99 are enriched in basic residues. 3 stretches are compositionally biased toward basic and acidic residues: residues Lys100–Val113, Ala151–Arg168, and Thr216–Lys230. A compositionally biased stretch (basic residues) spans Asp231 to Arg241. Residues Arg242–Asn258 show a composition bias toward basic and acidic residues. Residues Lys259–Asn271 are compositionally biased toward polar residues.

The protein resides in the cytoplasm. This is an uncharacterized protein from Saccharomyces cerevisiae (strain ATCC 204508 / S288c) (Baker's yeast).